We begin with the raw amino-acid sequence, 474 residues long: Sestrin homolog (474 aa).

The protein belongs to the sestrin family.

The protein localises to the nucleus. The protein resides in the cytoplasm. May function as a negative feedback regulator of TOR function. The sequence is that of Sestrin homolog from Caenorhabditis elegans.